The following is a 120-amino-acid chain: uncharacterized protein (120 aa).

This is an uncharacterized protein from Acanthamoeba polyphaga mimivirus (APMV).